Here is a 708-residue protein sequence, read N- to C-terminus: Leucine-rich repeat neuronal protein 3 (708 aa).

A signal peptide spans 1 to 22 (MKDMPLQIHVLLGLAITTLVQA). The 47-residue stretch at 23–69 (VDKKVDCPQLCTCEIRPWFTPTSIYMEASTVDCNDLGLLTFPARLPA) folds into the LRRNT domain. Topologically, residues 23–628 (VDKKVDCPQL…KEYEKSNTTT (606 aa)) are extracellular. LRR repeat units lie at residues 70–91 (NTQILLLQTNDIAKIEYSTDFP), 93–114 (NLTGLDLSQNNLSSVTNINVKK), 117–138 (QLLSVYLEENKLTELPEKCLSE), 141–162 (NLQELYINHNLLSTISPGAFIG), 165–186 (NLLRLHLNSNRLQMINSKWFDA), 189–210 (NLEILMIGENPIIRIKDMNFKP), 213–234 (NLRSLVIAGINLTEIPDNALVG), 237–258 (NLESISFYDNRLIKVPHAALQK), 261–282 (NLKFLDLNKNPINRIRRGDFSN), 285–304 (HLKELGINNMPELISIDSLA), 310–332 (DLRKIEATNNPRLSYIHPNAFFR), and 335–358 (KLESLMLNSNALSALYHGTIESLP). Residues asparagine 93 and asparagine 103 are each glycosylated (N-linked (GlcNAc...) asparagine). Asparagine 223 carries an N-linked (GlcNAc...) asparagine glycan. Residues 368 to 421 (NPIRCDCVIRWINMNKTNIRFMEPDSLFCVDPPEFQGQNVRQVHFRDMMEICLP) form the LRRCT domain. N-linked (GlcNAc...) asparagine glycosylation is present at asparagine 382. An Ig-like C2-type domain is found at 421–514 (PLIAPESFPS…DLKSVMIKVD (94 aa)). An intrachain disulfide couples cysteine 444 to cysteine 496. N-linked (GlcNAc...) asparagine glycans are attached at residues asparagine 522, asparagine 579, asparagine 608, and asparagine 625. Positions 523–617 (GSLNIKIRDI…NVTTKGLDPD (95 aa)) constitute a Fibronectin type-III domain. A helical membrane pass occupies residues 629-649 (LMACLGGLLGIIGVICLISCL). The Cytoplasmic segment spans residues 650–708 (SPEMNCDGGHSYVRNYLQKPTFALGELYPPLINLWEAGKEKSTSLKVKATVIGLPTNMS).

The protein localises to the membrane. The sequence is that of Leucine-rich repeat neuronal protein 3 (LRRN3) from Pongo abelii (Sumatran orangutan).